Here is a 320-residue protein sequence, read N- to C-terminus: Phospho-N-acetylmuramoyl-pentapeptide-transferase (320 aa).

9 helical membrane-spanning segments follow: residues 5-25, 51-71, 76-96, 124-144, 145-165, 176-196, 198-218, 233-255, and 298-318; these read LWALARAFIITVVFMPFLIKF, MGGLLFVLAAAISAFIGGAAY, GVVAMIIPVFALVAYAIIGGI, VVIMLIMWLLGVPFTLYIPMI, GTINLGLFYFVFLWFWLVGWS, GLLAGNSVVVYAAYTVIAMHM, NHIIVLFNFSIIGGLLGFLIF, LALGAGLAIESILLGVPFSLIWF, and WQIDLLFWIVSSILAVAGIFY.

Belongs to the glycosyltransferase 4 family. MraY subfamily. Requires Mg(2+) as cofactor.

It localises to the cell membrane. It carries out the reaction UDP-N-acetyl-alpha-D-muramoyl-L-alanyl-gamma-D-glutamyl-L-lysyl-D-alanyl-D-alanine + di-trans,octa-cis-undecaprenyl phosphate = Mur2Ac(oyl-L-Ala-gamma-D-Glu-L-Lys-D-Ala-D-Ala)-di-trans,octa-cis-undecaprenyl diphosphate + UMP. It participates in cell wall biogenesis; peptidoglycan biosynthesis. Catalyzes the initial step of the lipid cycle reactions in the biosynthesis of the cell wall peptidoglycan: transfers peptidoglycan precursor phospho-MurNAc-pentapeptide from UDP-MurNAc-pentapeptide onto the lipid carrier undecaprenyl phosphate, yielding undecaprenyl-pyrophosphoryl-MurNAc-pentapeptide, known as lipid I. The polypeptide is Phospho-N-acetylmuramoyl-pentapeptide-transferase (Leuconostoc citreum (strain KM20)).